Here is a 214-residue protein sequence, read N- to C-terminus: Pyridoxine/pyridoxamine 5'-phosphate oxidase (214 aa).

Residues 8–11 (RINY) and Lys-66 contribute to the substrate site. FMN is bound by residues 61 to 66 (RILLIK), 76 to 77 (FT), Arg-82, Lys-83, and Gln-105. The substrate site is built by Tyr-123, Arg-127, and Ser-131. FMN is bound by residues 140 to 141 (QS) and Trp-184. Residue 190-192 (RLH) coordinates substrate. Residue Arg-194 participates in FMN binding.

The protein belongs to the pyridoxamine 5'-phosphate oxidase family. Homodimer. It depends on FMN as a cofactor.

It carries out the reaction pyridoxamine 5'-phosphate + O2 + H2O = pyridoxal 5'-phosphate + H2O2 + NH4(+). The catalysed reaction is pyridoxine 5'-phosphate + O2 = pyridoxal 5'-phosphate + H2O2. Its pathway is cofactor metabolism; pyridoxal 5'-phosphate salvage; pyridoxal 5'-phosphate from pyridoxamine 5'-phosphate: step 1/1. It functions in the pathway cofactor metabolism; pyridoxal 5'-phosphate salvage; pyridoxal 5'-phosphate from pyridoxine 5'-phosphate: step 1/1. In terms of biological role, catalyzes the oxidation of either pyridoxine 5'-phosphate (PNP) or pyridoxamine 5'-phosphate (PMP) into pyridoxal 5'-phosphate (PLP). This chain is Pyridoxine/pyridoxamine 5'-phosphate oxidase, found in Burkholderia vietnamiensis (strain G4 / LMG 22486) (Burkholderia cepacia (strain R1808)).